The chain runs to 416 residues: Na(+)/H(+) antiporter NhaA (416 aa).

A run of 9 helical transmembrane segments spans residues 18–38, 59–79, 97–117, 127–147, 167–187, 265–285, 297–317, 333–353, and 363–383; these read VGGA…NSPW, LTLA…VAGL, ALPI…AAVI, GWAI…ALTG, LLAI…LWLL, GICV…ATVF, VMLG…WVAI, MFAL…VAEL, and LAKA…SALL. Residues 396 to 416 are disordered; it reads ALELQPDEGDASDPSEGGSLR.

This sequence belongs to the NhaA Na(+)/H(+) (TC 2.A.33) antiporter family.

It is found in the cell membrane. It catalyses the reaction Na(+)(in) + 2 H(+)(out) = Na(+)(out) + 2 H(+)(in). In terms of biological role, na(+)/H(+) antiporter that extrudes sodium in exchange for external protons. The sequence is that of Na(+)/H(+) antiporter NhaA from Nocardia farcinica (strain IFM 10152).